The chain runs to 313 residues: MNVEPGFSSQFSVPGSWFLEYHHTPVLLAEVVAGLLPRPGGRYIDGTVGGGGHAAAILEASSPDGRLLGIDCDPAALAAAAARLAPYGDRVTLVRGSFREIGQLAATSGFVQVEGVVLDLGVSSYQLDTPERGFSFQAHAPLDMRLDPDAPVTAAHLVNNLPEQELADLIFRYGEERGSRRIARAIVEARQRKPVTTTDELAAIVTRALGGQRGRIHPATRTFQALRIAVNNELASLEAALPQIIDLLAPGGRMAIIAFHSLEDRIVKHTLRAEAQAGRLHIITRKPVEASIEEQRANPRSRSARLRVAERVS.

S-adenosyl-L-methionine-binding positions include 51–53 (GGH), aspartate 71, phenylalanine 98, aspartate 119, and glutamine 126. The tract at residues 293–313 (EEQRANPRSRSARLRVAERVS) is disordered.

The protein belongs to the methyltransferase superfamily. RsmH family.

Its subcellular location is the cytoplasm. It carries out the reaction cytidine(1402) in 16S rRNA + S-adenosyl-L-methionine = N(4)-methylcytidine(1402) in 16S rRNA + S-adenosyl-L-homocysteine + H(+). Functionally, specifically methylates the N4 position of cytidine in position 1402 (C1402) of 16S rRNA. The polypeptide is Ribosomal RNA small subunit methyltransferase H (Roseiflexus sp. (strain RS-1)).